The chain runs to 291 residues: Lipase (291 aa).

The signal sequence occupies residues 1-17; it reads MRSSLVLFFVSAWTALA. A propeptide spanning residues 18-22 is cleaved from the precursor; it reads SPIRR. 3 disulfide bridges follow: C44–C290, C58–C63, and C126–C129. S168 (nucleophile) is an active-site residue. Residues D223 and H280 each act as charge relay system in the active site.

Belongs to the AB hydrolase superfamily. Lipase family.

It catalyses the reaction a triacylglycerol + H2O = a diacylglycerol + a fatty acid + H(+). The polypeptide is Lipase (LIP) (Thermomyces lanuginosus (Humicola lanuginosa)).